A 185-amino-acid chain; its full sequence is dCTP deaminase, dUMP-forming (185 aa).

DCTP-binding positions include Lys99–Arg104, Asp117, Thr125–Glu127, Gln146, Tyr159, Lys166, and Gln170. Catalysis depends on Glu127, which acts as the Proton donor/acceptor.

It belongs to the dCTP deaminase family. As to quaternary structure, homotrimer.

The catalysed reaction is dCTP + 2 H2O = dUMP + NH4(+) + diphosphate. It functions in the pathway pyrimidine metabolism; dUMP biosynthesis; dUMP from dCTP: step 1/1. Functionally, bifunctional enzyme that catalyzes both the deamination of dCTP to dUTP and the hydrolysis of dUTP to dUMP without releasing the toxic dUTP intermediate. In Methanospirillum hungatei JF-1 (strain ATCC 27890 / DSM 864 / NBRC 100397 / JF-1), this protein is dCTP deaminase, dUMP-forming.